The sequence spans 420 residues: L-rhamnose isomerase (420 aa).

3 residues coordinate Mn(2+): H264, D296, and D298.

It belongs to the rhamnose isomerase family. Requires Mn(2+) as cofactor.

It is found in the cytoplasm. The catalysed reaction is L-rhamnopyranose = L-rhamnulose. It functions in the pathway carbohydrate degradation; L-rhamnose degradation; glycerone phosphate from L-rhamnose: step 1/3. In terms of biological role, catalyzes the interconversion of L-rhamnose and L-rhamnulose. This is L-rhamnose isomerase from Listeria monocytogenes serotype 4b (strain CLIP80459).